Reading from the N-terminus, the 495-residue chain is Geraniol 8-hydroxylase (495 aa).

A helical transmembrane segment spans residues 5–25 (FLTIAIGFLFTITLYQALNFF). Cys438 is a heme binding site.

Belongs to the cytochrome P450 family. Requires heme as cofactor. Expressed in leaves, stems and roots.

Its subcellular location is the endoplasmic reticulum membrane. The enzyme catalyses (2E)-geraniol + reduced [NADPH--hemoprotein reductase] + O2 = (6E)-8-hydroxygeraniol + oxidized [NADPH--hemoprotein reductase] + H2O + H(+). Its function is as follows. Hydroxylase involved in the biosynthesis of hydroxygeraniol, a precursor of the iridoid monoterpenoid swertiamarin. The sequence is that of Geraniol 8-hydroxylase (CYP76B10) from Swertia mussotii (Felwort).